The chain runs to 448 residues: Tubulin beta chain (448 aa).

GTP-binding residues include Gln-11, Glu-69, Ser-138, Gly-142, Thr-143, Gly-144, Asn-204, and Asn-226. Position 69 (Glu-69) interacts with Mg(2+).

Belongs to the tubulin family. In terms of assembly, dimer of alpha and beta chains. A typical microtubule is a hollow water-filled tube with an outer diameter of 25 nm and an inner diameter of 15 nM. Alpha-beta heterodimers associate head-to-tail to form protofilaments running lengthwise along the microtubule wall with the beta-tubulin subunit facing the microtubule plus end conferring a structural polarity. Microtubules usually have 13 protofilaments but different protofilament numbers can be found in some organisms and specialized cells. Mg(2+) is required as a cofactor.

It localises to the cytoplasm. The protein resides in the cytoskeleton. Its function is as follows. Tubulin is the major constituent of microtubules, a cylinder consisting of laterally associated linear protofilaments composed of alpha- and beta-tubulin heterodimers. Microtubules grow by the addition of GTP-tubulin dimers to the microtubule end, where a stabilizing cap forms. Below the cap, tubulin dimers are in GDP-bound state, owing to GTPase activity of alpha-tubulin. This is Tubulin beta chain (TUB1) from Melampsora lini (Rust fungus).